The chain runs to 482 residues: Zinc finger protein 385B (482 aa).

Residues 1 to 105 (MNMATFLRGF…TGSACHTTTL (105 aa)) form a required for induction of apoptosis region. 2 consecutive Matrin-type zinc fingers follow at residues 34-64 (SFCE…RVKQ) and 169-199 (ISCN…KVKA). Disordered stretches follow at residues 54 to 75 (DGKS…PPVQ), 189 to 259 (KGSK…SFLL), and 268 to 287 (LGAI…SVAE). The segment at 106 to 482 (PALVRTPTLM…TPASILFAPY (377 aa)) is interaction with p53/TP53. Basic and acidic residues predominate over residues 231–240 (SSDKSEDKGK). The Matrin-type 3 zinc finger occupies 294–328 (KKLLYCSLCKVAVNSLSQLEAHNTGSKHKTMVEAR). 2 disordered regions span residues 331–352 (AGPI…GSKG) and 378–397 (HISS…KPKY). The Matrin-type 4 zinc-finger motif lies at 360–390 (FHCEICDVHVNSEIQLKQHISSRRHKDRVAG).

In terms of assembly, interacts with p53/TP53; the interaction is direct.

The protein resides in the nucleus. Its function is as follows. May play a role in p53/TP53-mediated apoptosis. This Mus musculus (Mouse) protein is Zinc finger protein 385B (Znf385b).